An 875-amino-acid polypeptide reads, in one-letter code: Leucine--tRNA ligase (875 aa).

Positions 57-67 (PYPSGQIHMGH) match the 'HIGH' region motif. The short motif at 631–635 (KMSKS) is the 'KMSKS' region element. Residue K634 coordinates ATP.

The protein belongs to the class-I aminoacyl-tRNA synthetase family.

The protein resides in the cytoplasm. It carries out the reaction tRNA(Leu) + L-leucine + ATP = L-leucyl-tRNA(Leu) + AMP + diphosphate. The chain is Leucine--tRNA ligase from Granulibacter bethesdensis (strain ATCC BAA-1260 / CGDNIH1).